The sequence spans 392 residues: Succinate--CoA ligase [ADP-forming] subunit beta (392 aa).

The ATP-grasp domain maps to Lys9–Lys248. ATP-binding positions include Lys50, Gly57–Gly59, Val106, and Glu111. Positions 203 and 217 each coordinate Mg(2+). Substrate contacts are provided by residues Asn268 and Gly325–Val327.

Belongs to the succinate/malate CoA ligase beta subunit family. As to quaternary structure, heterotetramer of two alpha and two beta subunits. Mg(2+) serves as cofactor.

The catalysed reaction is succinate + ATP + CoA = succinyl-CoA + ADP + phosphate. It catalyses the reaction GTP + succinate + CoA = succinyl-CoA + GDP + phosphate. Its pathway is carbohydrate metabolism; tricarboxylic acid cycle; succinate from succinyl-CoA (ligase route): step 1/1. In terms of biological role, succinyl-CoA synthetase functions in the citric acid cycle (TCA), coupling the hydrolysis of succinyl-CoA to the synthesis of either ATP or GTP and thus represents the only step of substrate-level phosphorylation in the TCA. The beta subunit provides nucleotide specificity of the enzyme and binds the substrate succinate, while the binding sites for coenzyme A and phosphate are found in the alpha subunit. The sequence is that of Succinate--CoA ligase [ADP-forming] subunit beta from Salinibacter ruber (strain DSM 13855 / M31).